The following is a 426-amino-acid chain: 3-isopropylmalate dehydratase large subunit (426 aa).

3 residues coordinate [4Fe-4S] cluster: cysteine 307, cysteine 367, and cysteine 370.

The protein belongs to the aconitase/IPM isomerase family. LeuC type 2 subfamily. As to quaternary structure, heterodimer of LeuC and LeuD. [4Fe-4S] cluster serves as cofactor.

The enzyme catalyses (2R,3S)-3-isopropylmalate = (2S)-2-isopropylmalate. The protein operates within amino-acid biosynthesis; L-leucine biosynthesis; L-leucine from 3-methyl-2-oxobutanoate: step 2/4. Its function is as follows. Catalyzes the isomerization between 2-isopropylmalate and 3-isopropylmalate, via the formation of 2-isopropylmaleate. This Sulfurovum sp. (strain NBC37-1) protein is 3-isopropylmalate dehydratase large subunit.